Here is a 309-residue protein sequence, read N- to C-terminus: D-galacturonate reductase (309 aa).

Catalysis depends on tyrosine 50, which acts as the Proton donor. Residue histidine 109 coordinates substrate. 210–264 (SPLGSTGSPLMSADPVVKIAEKKGISPTTVLLSYHVNRGSTVLAKSVTPARIKAN) is an NADP(+) binding site.

It belongs to the aldo/keto reductase family.

The enzyme catalyses L-galactonate + NADP(+) = aldehydo-D-galacturonate + NADPH + H(+). It participates in carbohydrate acid metabolism. Functionally, mediates the reduction of D-galacturonate to L-galactonate, the first step in D-galacturonate catabolic process. Also has activity with D-glucuronate and DL-glyceraldehyde. No activity is observed with D-glucose, D-fructose, D-xylose, D-galactose, L-arabinose or D-mannose. Activity is seen only with NADPH and not with NADH. The chain is D-galacturonate reductase (gar1) from Hypocrea jecorina (Trichoderma reesei).